Here is a 396-residue protein sequence, read N- to C-terminus: Fumarate--(S)-2,3-diaminopropanoate ligase (396 aa).

The catalysed reaction is (S)-2,3-diaminopropanoate + fumarate + ATP = N(3)-fumaroyl-(S)-2,3-diaminopropanoate + AMP + diphosphate. It participates in antibiotic biosynthesis. In terms of biological role, involved in dapdiamide antibiotics biosynthesis. Ligates fumarate and 2,3-diaminopropionate (DAP) to form N-beta-fumaroyl-DAP. Can also form N-succinoyl-DAP from succinate and DAP, with lower efficiency. This Enterobacter agglomerans (Erwinia herbicola) protein is Fumarate--(S)-2,3-diaminopropanoate ligase.